The following is a 336-amino-acid chain: N-((2S)-2-amino-2-carboxyethyl)-L-glutamate dehydrogenase (336 aa).

K78 functions as the Proton donor/acceptor in the catalytic mechanism. NAD(+) contacts are provided by R122 and K242.

It belongs to the ornithine cyclodeaminase/mu-crystallin family. As to quaternary structure, homodimer.

The enzyme catalyses N-[(2S)-2-amino-2-carboxyethyl]-L-glutamate + NAD(+) + H2O = (S)-2,3-diaminopropanoate + 2-oxoglutarate + NADH + H(+). The protein operates within siderophore biosynthesis. Functionally, catalyzes the hydrolysis of N-((2S)-2-amino-2-carboxyethyl)-L-glutamate (ACEGA) to form L-2,3-diaminopropionic acid and 2-oxoglutarate. Involved in the biosynthesis of L-2,3-diaminopropionic acid (L-Dap), a precursor of staphyloferrin B and antibiotics. This Staphylococcus aureus (strain NCTC 8325 / PS 47) protein is N-((2S)-2-amino-2-carboxyethyl)-L-glutamate dehydrogenase.